A 141-amino-acid polypeptide reads, in one-letter code: UPF0179 protein Cmaq_1008 (141 aa).

This sequence belongs to the UPF0179 family.

This Caldivirga maquilingensis (strain ATCC 700844 / DSM 13496 / JCM 10307 / IC-167) protein is UPF0179 protein Cmaq_1008.